Reading from the N-terminus, the 635-residue chain is Early transcription factor 70 kDa subunit (635 aa).

The 154-residue stretch at 32-185 (RSILDENNSV…SNIISIMSDE (154 aa)) folds into the Helicase ATP-binding domain. Residue 45-52 (HIMGSGKT) participates in ATP binding. The short motif at 135–138 (DEAH) is the DEXH box element.

It belongs to the helicase family. VETF subfamily. In terms of assembly, heterodimer of a 70 kDa and a 82 kDa subunit. Part of the early transcription complex composed of ETF, RAP94, and the DNA-directed RNA polymerase.

The protein resides in the virion. Acts with RNA polymerase to initiate transcription from early gene promoters. Is recruited by the RPO-associated protein of 94 kDa (RAP94) to form the early transcription complex, which also contains the core RNA polymerase. ETF heterodimer binds to early gene promoters. The sequence is that of Early transcription factor 70 kDa subunit (VETFS) from Homo sapiens (Human).